Here is a 742-residue protein sequence, read N- to C-terminus: uncharacterized protein (742 aa).

Positions 1–102 are disordered; sequence MMLLKRSNDN…FTQTKPNNTD (102 aa). A compositionally biased stretch (low complexity) spans 18-28; that stretch reads NRQNRQNNRQN. Residues 48-57 are compositionally biased toward basic and acidic residues; sequence RDSSRMDPVD. 2 stretches are compositionally biased toward polar residues: residues 60-69 and 77-99; these read TLISFTSGKP and HDTG…TKPN.

This is an uncharacterized protein from Acanthamoeba polyphaga mimivirus (APMV).